A 1277-amino-acid polypeptide reads, in one-letter code: NPC intracellular cholesterol transporter 1 (1277 aa).

A signal peptide spans 1-22 (MGAHHPALGLLLLLLCPAQVFS). The Lumenal portion of the chain corresponds to 23–269 (QSCVWYGECG…WRIWGLDAMY (247 aa)). 9 disulfides stabilise this stretch: cysteine 25–cysteine 74, cysteine 31–cysteine 42, cysteine 63–cysteine 109, cysteine 75–cysteine 113, cysteine 97–cysteine 238, cysteine 100–cysteine 160, cysteine 177–cysteine 184, cysteine 227–cysteine 243, and cysteine 240–cysteine 247. Asparagine 41 is a cholesterol binding site. Residue asparagine 70 is glycosylated (N-linked (GlcNAc...) asparagine). Residue glutamine 79 coordinates cholesterol. Residues asparagine 122 and asparagine 137 are each glycosylated (N-linked (GlcNAc...) asparagine). The tract at residues 175-205 (LLCGRDARACNATNWIEYMFNKDNGQAPFTI) is important for cholesterol binding and cholesterol transfer from NPC1 to liposomes. Residues asparagine 185, asparagine 222, and asparagine 228 are each glycosylated (N-linked (GlcNAc...) asparagine). The chain crosses the membrane as a helical span at residues 270–290 (VIMWVTYVAFLFVFFGALLAV). At 291 to 350 (WCHRRRYFVSEYTPIDSNIAFSVNSSDKGEASCCDPLGAAFDDCLRRMFTKWGAFCVRNP) the chain is on the cytoplasmic side. A helical transmembrane segment spans residues 351-371 (TCIIFFSLAFITVCSSGLVFV). The Lumenal segment spans residues 372–621 (QVTTNPVELW…ELNRESNSDV (250 aa)). Residues asparagine 414, asparagine 459, asparagine 478, and asparagine 524 are each glycosylated (N-linked (GlcNAc...) asparagine). Cystine bridges form between cysteine 468–cysteine 479 and cysteine 516–cysteine 533. The SSD domain occupies 620–785 (DVFTVIISYV…ITCFVSLLGL (166 aa)). A helical membrane pass occupies residues 622–642 (FTVIISYVVMFLYISLALGHI). Residues 643 to 653 (QSCSRLLVDSK) are Cytoplasmic-facing. A helical transmembrane segment spans residues 654–674 (ISLGIAGILIVLSSVACSLGI). Residues 675–683 (FSYMGMPLT) lie on the Lumenal side of the membrane. A helical transmembrane segment spans residues 684-704 (LIVIEVIPFLVLAVGVDNIFI). The Cytoplasmic segment spans residues 705–730 (LVQTYQRDERLQEETLDQQLGRILGE). The helical transmembrane segment at 731–751 (VAPTMFLSSFSETSAFFFGAL) threads the bilayer. Residues 752-759 (SSMPAVHT) are Lumenal-facing. The chain crosses the membrane as a helical span at residues 760 to 780 (FSLFAGMAVLIDFLLQITCFV). Residues 781–832 (SLLGLDIKRQEKNHLDILCCVRGADDGQGSHASESYLFRFFKNYFAPLLLKD) lie on the Cytoplasmic side of the membrane. The helical transmembrane segment at 833–853 (WLRPIVVAVFVGVLSFSVAVV) threads the bilayer. Residues 854–1097 (NKVDIGLDQS…EQYLTIIDDT (244 aa)) lie on the Lumenal side of the membrane. Asparagine 868 and asparagine 898 each carry an N-linked (GlcNAc...) asparagine glycan. A disulfide bridge links cysteine 909 with cysteine 914. Residues asparagine 916, asparagine 961, asparagine 968, and asparagine 1063 are each glycosylated (N-linked (GlcNAc...) asparagine). 3 disulfide bridges follow: cysteine 956–cysteine 1011, cysteine 957–cysteine 979, and cysteine 967–cysteine 976. The helical transmembrane segment at 1098-1118 (IFNLSVSLGSIFLVTLVVLGC) threads the bilayer. At 1119-1123 (ELWSA) the chain is on the cytoplasmic side. A helical membrane pass occupies residues 1124 to 1144 (VIMCITIAMILVNMFGVMWLW). Glycine 1145 is a topological domain (lumenal). A helical transmembrane segment spans residues 1146–1166 (ISLNAVSLVNLVMSCGISVEF). The Cytoplasmic portion of the chain corresponds to 1167-1194 (CSHITRAFTMSTKGSRVSRAEEALAHMG). Residues 1195–1215 (SSVFSGITLTKFGGIVVLAFA) form a helical membrane-spanning segment. Topologically, residues 1216-1226 (KSQIFEIFYFR) are lumenal. The helical transmembrane segment at 1227-1247 (MYLAMVLLGATHGLIFLPVLL) threads the bilayer. The Cytoplasmic segment spans residues 1248-1277 (SYIGPSVNKAKRHTTYERYRGTERERLLNF). The tract at residues 1274-1277 (LLNF) is required for location in lysosomes. The Di-leucine motif signature appears at 1274-1277 (LLNF).

This sequence belongs to the patched family. As to quaternary structure, interacts (via the second lumenal domain) with NPC2. Interacts with TMEM97; the interaction may decrease NPC1 availability to the cell. Interacts with TIM1. Interacts with SLC38A9; this interaction inhibits cholesterol-mediated mTORC1 activation via its sterol transport activity. In terms of processing, N-glycosylated. In terms of tissue distribution, detected in liver (at protein level). Ubiquitous. Detected in adult heart, spleen, lung, liver, skeletal muscle, kidney, testis.

Its subcellular location is the late endosome membrane. It localises to the lysosome membrane. It carries out the reaction cholesterol(in) = cholesterol(out). Its function is as follows. Intracellular cholesterol transporter which acts in concert with NPC2 and plays an important role in the egress of cholesterol from the endosomal/lysosomal compartment. Unesterified cholesterol that has been released from LDLs in the lumen of the late endosomes/lysosomes is transferred by NPC2 to the cholesterol-binding pocket in the N-terminal domain of NPC1. Cholesterol binds to NPC1 with the hydroxyl group buried in the binding pocket. May play a role in vesicular trafficking in glia, a process that may be crucial for maintaining the structural and functional integrity of nerve terminals. Inhibits cholesterol-mediated mTORC1 activation throught its interaction with SLC38A9. The polypeptide is NPC intracellular cholesterol transporter 1 (Mus musculus (Mouse)).